The chain runs to 454 residues: F-box/WD repeat-containing protein 2 (454 aa).

Positions 54–101 (RDFLKLLPLELSFYLLKWLDPQTLLTCCLVSKQWNKVISACTEVWQTA) constitute an F-box domain. 7 WD repeats span residues 139-175 (FETS…LWDV), 179-213 (QCVY…CWEW), 217-255 (ARTQ…VWAL), 259-306 (TCLN…IWPI), 313-352 (KCLK…QWDF), 364-403 (PEIA…RWPL), and 410-452 (KRGS…LWKE). N6-acetyllysine is present on Lys298.

Directly interacts with SKP1 and CUL1.

Functionally, substrate-recognition component of the SCF (SKP1-CUL1-F-box protein)-type E3 ubiquitin ligase complex. The chain is F-box/WD repeat-containing protein 2 (FBXW2) from Homo sapiens (Human).